Here is a 312-residue protein sequence, read N- to C-terminus: tRNA pseudouridine synthase B (312 aa).

Asp-46 functions as the Nucleophile in the catalytic mechanism. Substrate contacts are provided by Tyr-74, Tyr-177, and Leu-198.

This sequence belongs to the pseudouridine synthase TruB family. Type 1 subfamily.

It catalyses the reaction uridine(55) in tRNA = pseudouridine(55) in tRNA. Responsible for synthesis of pseudouridine from uracil-55 in the psi GC loop of transfer RNAs. This is tRNA pseudouridine synthase B from Buchnera aphidicola subsp. Acyrthosiphon pisum (strain APS) (Acyrthosiphon pisum symbiotic bacterium).